The primary structure comprises 468 residues: Midnolin (468 aa).

Residues 31-105 (MSLAIHSTTG…LTLVPTVEAG (75 aa)) form the Ubiquitin-like domain. 2 disordered regions span residues 182–264 (PSIA…RSRK) and 404–447 (LRRK…LGLD). Positions 185–201 (ASPVSSPCRPVSSAARV) are enriched in low complexity. Positions 202–213 (PPVPTSPSPASP) are enriched in pro residues. 2 stretches are compositionally biased toward low complexity: residues 237 to 260 (SPTA…SPAP) and 419 to 431 (SPSR…DSSS).

Interacts with GCK; the interaction occurs preferentially at low glucose levels. Interacts with the proteasome.

It is found in the nucleus. Its subcellular location is the nucleolus. The protein localises to the cytoplasm. The protein resides in the cytosol. Facilitates the ubiquitin-independent proteasomal degradation of stimulus-induced transcription factors such as FOSB, EGR1, NR4A1, and IRF4 to the proteasome for degradation. Promotes also the degradation of other substrates such as CBX4. Plays a role in inhibiting the activity of glucokinase GCK and both glucose-induced and basal insulin secretion. The chain is Midnolin (MIDN) from Homo sapiens (Human).